Reading from the N-terminus, the 185-residue chain is Ribosome-recycling factor (185 aa).

This sequence belongs to the RRF family.

Its subcellular location is the cytoplasm. Functionally, responsible for the release of ribosomes from messenger RNA at the termination of protein biosynthesis. May increase the efficiency of translation by recycling ribosomes from one round of translation to another. The chain is Ribosome-recycling factor from Corynebacterium aurimucosum (strain ATCC 700975 / DSM 44827 / CIP 107346 / CN-1) (Corynebacterium nigricans).